Consider the following 405-residue polypeptide: Tyrosine--tRNA ligase (405 aa).

Residues 46–55 (PTRPDIHLGH) carry the 'HIGH' region motif. Residues 230–234 (KMSKS) carry the 'KMSKS' region motif. Residue K233 participates in ATP binding. The S4 RNA-binding domain occupies 341–404 (MGLAALMVKA…GKKKFVKIVV (64 aa)).

The protein belongs to the class-I aminoacyl-tRNA synthetase family. TyrS type 2 subfamily. In terms of assembly, homodimer.

It localises to the cytoplasm. The catalysed reaction is tRNA(Tyr) + L-tyrosine + ATP = L-tyrosyl-tRNA(Tyr) + AMP + diphosphate + H(+). Functionally, catalyzes the attachment of tyrosine to tRNA(Tyr) in a two-step reaction: tyrosine is first activated by ATP to form Tyr-AMP and then transferred to the acceptor end of tRNA(Tyr). The protein is Tyrosine--tRNA ligase of Bdellovibrio bacteriovorus (strain ATCC 15356 / DSM 50701 / NCIMB 9529 / HD100).